Reading from the N-terminus, the 96-residue chain is Co-chaperonin GroES (96 aa).

The protein belongs to the GroES chaperonin family. In terms of assembly, heptamer of 7 subunits arranged in a ring. Interacts with the chaperonin GroEL.

The protein resides in the cytoplasm. Its function is as follows. Together with the chaperonin GroEL, plays an essential role in assisting protein folding. The GroEL-GroES system forms a nano-cage that allows encapsulation of the non-native substrate proteins and provides a physical environment optimized to promote and accelerate protein folding. GroES binds to the apical surface of the GroEL ring, thereby capping the opening of the GroEL channel. The protein is Co-chaperonin GroES of Acinetobacter baylyi (strain ATCC 33305 / BD413 / ADP1).